We begin with the raw amino-acid sequence, 312 residues long: MKVAVLGAAGGIGQALALLLKTQLPSGSELSLYDIAPVTPGVAVDLSHIPTAVKIKGFSGEDATPALEGADVVLISAGVARKPGMDRSDLFNVNAGIVKNLVQQVAKNCPKACIGIITNPVNTTVAIAAEVLKKAGVYDKNKLFGVTTLDIIRSNTFVAELKGKQPGEVEVPVIGGHSGVTILPLLSQVPGVSFTEQEVADLTKRIQNAGTEVVEAKAGGGSATLSMGQAAARFGLSLVRALQGEQGVVECAYVEGDGQYARFFSQPLLLGKNGVEERKSIGTLSAFEQNALEGMLDTLKKDIALGKEFVNK.

NAD(+) is bound by residues 7–13 (GAAGGIG) and Asp-34. Arg-81 and Arg-87 together coordinate substrate. Residues Asn-94 and 117-119 (ITN) contribute to the NAD(+) site. Substrate-binding residues include Asn-119 and Arg-153. Residue His-177 is the Proton acceptor of the active site. Residue Met-227 coordinates NAD(+).

Belongs to the LDH/MDH superfamily. MDH type 1 family. Homodimer.

The catalysed reaction is (S)-malate + NAD(+) = oxaloacetate + NADH + H(+). In terms of biological role, catalyzes the reversible oxidation of malate to oxaloacetate. This Shigella flexneri serotype 5b (strain 8401) protein is Malate dehydrogenase.